The sequence spans 185 residues: Neuronal vesicle trafficking-associated protein 1 (185 aa).

Residues 1-82 (MVKLGNNFAE…ITEGVTERFK (82 aa)) are Cytoplasmic-facing. A helical; Signal-anchor for type II membrane protein membrane pass occupies residues 83–103 (VSVLVLFALAFLTCVVFLVVY). Residues 104–185 (KVYKYDRACP…QETEAAEKSA (82 aa)) are Lumenal-facing. The tract at residues 129-164 (ESYYTEQDSSAREKFYTVINHYNLAKQSITRSVSPW) is required for GRIP1 interaction.

The protein belongs to the NSG family. In terms of assembly, forms a complex with GRIP1, GRIA2 and STX12; controls the intracellular fate of AMPAR and the endosomal sorting of the GRIA2 subunit toward recycling and membrane targeting. Interacts with GRIP1. Interacts with STX12. Interacts with APP; could regulate APP processing. Interacts with FAM171A1. As to expression, widely expressed in brain and spinal cord. Expressed in neurons during maturation and synapse formation.

The protein localises to the membrane. It localises to the golgi apparatus. Its subcellular location is the trans-Golgi network membrane. The protein resides in the endosome membrane. It is found in the cell projection. The protein localises to the dendrite. It localises to the early endosome membrane. Its subcellular location is the late endosome membrane. The protein resides in the lysosome lumen. It is found in the recycling endosome membrane. The protein localises to the cytoplasmic vesicle membrane. It localises to the golgi stack membrane. Its subcellular location is the endosome. The protein resides in the multivesicular body membrane. It is found in the endoplasmic reticulum membrane. In terms of biological role, plays a role in the recycling mechanism in neurons of multiple receptors, including AMPAR, APP and L1CAM and acts at the level of early endosomes to promote sorting of receptors toward a recycling pathway. Regulates sorting and recycling of GRIA2 through interaction with GRIP1 and then contributes to the regulation of synaptic transmission and plasticity by affecting the recycling and targeting of AMPA receptors to the synapse. Is required for faithful sorting of L1CAM to axons by facilitating trafficking from somatodendritic early endosome or the recycling endosome. In an other hand, induces apoptosis via the activation of CASP3 in response to DNA damage. The protein is Neuronal vesicle trafficking-associated protein 1 of Rattus norvegicus (Rat).